The following is a 1100-amino-acid chain: Exportin-T (1100 aa).

It belongs to the exportin family. In terms of assembly, interacts with GSP1, GSP2, NSP1, NUP2 and UTP8.

Its subcellular location is the nucleus. It is found in the cytoplasm. Its function is as follows. tRNA nucleus export receptor which facilitates tRNA translocation across the nuclear pore complex. Preferentially interacts with tRNAs with mature 5'- and 3'-termini and does not distinguish between intron-containing and spliced tRNAs. In the nucleus binds to tRNA and to the Ran-GTPases GSP1 or GSP2 in their active GTP-bound form. Docking of this trimeric complex to the nuclear pore complex (NPC) is mediated through binding to nucleoporins. Upon transit of a nuclear export complex into the cytoplasm, disassembling of the complex and hydrolysis of Ran-GTP to Ran-GDP cause release of the tRNA from the export receptor. The directionality of nuclear export is thought to be conferred by an asymmetric distribution of the GTP- and GDP-bound forms of Ran between the cytoplasm and nucleus. Involved in pre-tRNA splicing, probably by affecting the interaction of pre-tRNA with splicing endonuclease. This chain is Exportin-T (LOS1), found in Saccharomyces cerevisiae (strain YJM789) (Baker's yeast).